The following is a 443-amino-acid chain: MESLVTLYQEHIKTLQQRAQQVLARHSLDAMLIHSGELLTVFLDDHTYPFKVNPQFKAWVPVTQVPNCWLWIDGVNKPKLWFYSPVDYWHDVEPLPQSFWTGEIDIVPLKNADDIARLLPTQRQNVAYIGPVPARATQLGFNTEAINPPGVIDFLHYHRAYKTGYELYCLRQAQVIAVTGHRAAKEAFKSRLSEFDINVAYLSATGHRDTDVPYGNIIALNEHAAVLHYTKLDQQPPEKRRSFLIDAGAEYQGYAADLTRSYAASEGSDYAQLIKDMNKEELELIATMKTGVRYTEYHQQMHYRIASLLLKHQLVNGLTAEAMVKENLTGPFMPHGIGHSLGLQVHDVAGFMQDDRGTHLAAPQQYPYLRCTRVLEPGMVLTIEPGIYFIDSLLAPWRAGKFSQYFDWAKIDELKAYGGIRIEDNVVIHKNSVENMTRDLHLA.

5 residues coordinate Mn(2+): Asp-246, Asp-257, His-339, Glu-384, and Glu-423.

This sequence belongs to the peptidase M24B family. Bacterial-type prolidase subfamily. Mn(2+) is required as a cofactor.

It catalyses the reaction Xaa-L-Pro dipeptide + H2O = an L-alpha-amino acid + L-proline. Splits dipeptides with a prolyl residue in the C-terminal position. This chain is Xaa-Pro dipeptidase, found in Erwinia tasmaniensis (strain DSM 17950 / CFBP 7177 / CIP 109463 / NCPPB 4357 / Et1/99).